We begin with the raw amino-acid sequence, 358 residues long: G-protein coupled receptor 87 (358 aa).

Residues 1-47 are Extracellular-facing; that stretch reads MGLNLTLTKLPGNELYSQASHTANSTSEGHGKNSTLHNKFDTIILPV. N4, N24, and N33 each carry an N-linked (GlcNAc...) asparagine glycan. Residues 48–68 traverse the membrane as a helical segment; sequence LYLVIFVASILLNGLAVWIFF. The Cytoplasmic segment spans residues 69 to 75; it reads HIRNKTS. A helical membrane pass occupies residues 76–96; that stretch reads FIFYLKNIVVADLIMTLTFPF. Residues 97–116 are Extracellular-facing; sequence RIVRDAGFGPWYFEFILCRY. An intrachain disulfide couples C114 to C192. Residues 117-137 traverse the membrane as a helical segment; the sequence is TSVLFYANMYTSIVFLGLISV. Topologically, residues 138 to 159 are cytoplasmic; the sequence is DRYLKVVKPFGDSRMYSITFTK. The chain crosses the membrane as a helical span at residues 160–180; sequence VLSVCVWVIMAILSLPNIILT. Residues 181–208 are Extracellular-facing; it reads NGQPTKENIHDCMKLKSPLGAKWHMAVT. A helical membrane pass occupies residues 209 to 229; that stretch reads YVDSCLFVAVLVILIGCYIAI. Topologically, residues 230–256 are cytoplasmic; it reads SRYIHKSSRQFISQSSRKRKHNQSIRV. The chain crosses the membrane as a helical span at residues 257–277; the sequence is VVAVFFTCFLPYHLCRIPFTF. At 278-297 the chain is on the extracellular side; the sequence is SNLDRLLDESAHKILYYCKE. Residues 298–318 form a helical membrane-spanning segment; that stretch reads MTLFLSACNVCLDPIIYFFMC. Topologically, residues 319-358 are cytoplasmic; sequence KSFSRRLFKKSNIRTRSESIRSLQSVRRSEVRIYYDYTDV.

It belongs to the G-protein coupled receptor 1 family. In terms of tissue distribution, expressed at high levels in testis and brain and to a lesser extent placenta, ovary, prostate, and skeletal muscle but not in heart, lung, kidney, liver or intestine.

It localises to the cell membrane. Its function is as follows. Receptor for lysophosphatidic acid (LPA). Necessary for p53/TP53-dependent survival in response to DNA damage. Promotes the Hippo-YAP signaling pathway and thereby modulates glycolysis and oxidative stress production by the regulation of hexokinase-2/HK2. The sequence is that of G-protein coupled receptor 87 (Gpr87) from Mus musculus (Mouse).